A 151-amino-acid polypeptide reads, in one-letter code: UPF0178 protein Spea_2958 (151 aa).

It belongs to the UPF0178 family.

This Shewanella pealeana (strain ATCC 700345 / ANG-SQ1) protein is UPF0178 protein Spea_2958.